The primary structure comprises 322 residues: Eukaryotic translation initiation factor 3 subunit I (322 aa).

5 WD repeats span residues 4 to 43 (GHER…RLGT), 46 to 85 (GHQG…VIAS), 141 to 180 (MTES…KVVD), 184 to 223 (DHTG…CLKT), and 281 to 322 (GHFG…NIFE).

Belongs to the eIF-3 subunit I family. Component of the eukaryotic translation initiation factor 3 (eIF-3) complex. The eIF-3 complex interacts with pix.

The protein resides in the cytoplasm. Component of the eukaryotic translation initiation factor 3 (eIF-3) complex, which is involved in protein synthesis of a specialized repertoire of mRNAs and, together with other initiation factors, stimulates binding of mRNA and methionyl-tRNAi to the 40S ribosome. The eIF-3 complex specifically targets and initiates translation of a subset of mRNAs involved in cell proliferation. In Drosophila willistoni (Fruit fly), this protein is Eukaryotic translation initiation factor 3 subunit I.